The sequence spans 138 residues: Flagellar basal body rod protein FlgB (138 aa).

The protein belongs to the flagella basal body rod proteins family. The basal body constitutes a major portion of the flagellar organelle and consists of a number of rings mounted on a central rod. In Gram-negative bacteria, at least four rings, L, P, S and M are present, whereas Gram-positive bacteria lack the L and P rings. The rod consists of about 26 subunits of FlgG in the distal portion, and FlgB, FlgC and FlgF build up the proximal portion of the rod with about 6 subunits each. Rod assembly occurs by export via the flagellum-specific pathway of its constituent proteins and by their incorporation into the rod structure in the probable order of FlgB, FlgC, FlgF and FlgG. Another protein, FliE, also assembles onto the stable rod structure. Interacts with FliE and peptidoglycan hydrolase FlgJ (via N-terminus), which seems to function as a scaffold or cap for rod assembly.

The protein resides in the bacterial flagellum basal body. Functionally, structural component of flagellum, the bacterial motility apparatus. Part of the rod structure of flagellar basal body. The sequence is that of Flagellar basal body rod protein FlgB (flgB) from Salmonella typhimurium (strain LT2 / SGSC1412 / ATCC 700720).